Consider the following 531-residue polypeptide: Splicing factor ESS-2 (531 aa).

2 disordered regions span residues 104 to 163 (RTPI…RKKK) and 453 to 531 (PFAS…GDFF). The segment covering 105-114 (TPITTRSTTE) has biased composition (polar residues). Composition is skewed to low complexity over residues 125–136 (TPGPSSASTSSA) and 464–477 (SRPS…TPGS). Residues 480 to 498 (SRGSTTPGSSWSQGAQTPG) show a composition bias toward polar residues.

The protein belongs to the ESS2 family.

It localises to the nucleus. In terms of biological role, regulates pre-mRNA splicing. In Caenorhabditis elegans, this protein is Splicing factor ESS-2 (ess-2).